Here is a 340-residue protein sequence, read N- to C-terminus: Putative Ig-like domain-containing protein C1 (340 aa).

One can recognise an Ig-like domain in the interval 207-294 (PTVTVTGIER…SSPRVMVPTI (88 aa)).

This is Putative Ig-like domain-containing protein C1 from Sus scrofa (Pig).